A 113-amino-acid chain; its full sequence is U11-theraphotoxin-Hhn1a (113 aa).

The first 21 residues, 1 to 21 (MNTVRVTFLLVFVLAVSLGQA), serve as a signal peptide directing secretion. Positions 22-74 (DKDENRMEMQEKTEQGNSYLDFAENLPLQKLEELEAKLLEEDSEESRNSRQKR) are excised as a propeptide. The segment covering 60-69 (LEEDSEESRN) has biased composition (basic and acidic residues). Residues 60-83 (LEEDSEESRNSRQKRCIGEGVPCD) form a disordered region. Intrachain disulfides connect cysteine 75-cysteine 90, cysteine 82-cysteine 95, and cysteine 89-cysteine 110.

This sequence belongs to the neurotoxin 14 (magi-1) family. 01 (HNTX-16) subfamily. Expressed by the venom gland.

Its subcellular location is the secreted. Its function is as follows. Probable ion channel inhibitor. The polypeptide is U11-theraphotoxin-Hhn1a (Cyriopagopus hainanus (Chinese bird spider)).